The sequence spans 301 residues: GTPase Era (301 aa).

One can recognise an Era-type G domain in the interval 7-175 (YCGFIAIVGR…ASIVRKHLPE (169 aa)). The segment at 15–22 (GRPNVGKS) is G1. A GTP-binding site is contributed by 15 to 22 (GRPNVGKS). Residues 41–45 (QTTRH) are G2. The tract at residues 62-65 (DTPG) is G3. GTP is bound by residues 62–66 (DTPGL) and 124–127 (NKVD). The interval 124-127 (NKVD) is G4. Positions 154 to 156 (ISA) are G5. Residues 206–283 (LGAELPYSVT…HLELWVKVKS (78 aa)) form the KH type-2 domain.

It belongs to the TRAFAC class TrmE-Era-EngA-EngB-Septin-like GTPase superfamily. Era GTPase family. In terms of assembly, monomer.

It is found in the cytoplasm. The protein localises to the cell inner membrane. Functionally, an essential GTPase that binds both GDP and GTP, with rapid nucleotide exchange. Plays a role in 16S rRNA processing and 30S ribosomal subunit biogenesis and possibly also in cell cycle regulation and energy metabolism. The sequence is that of GTPase Era from Salmonella arizonae (strain ATCC BAA-731 / CDC346-86 / RSK2980).